A 398-amino-acid chain; its full sequence is Acetate kinase (398 aa).

Residue asparagine 7 participates in Mg(2+) binding. Residue lysine 14 participates in ATP binding. A substrate-binding site is contributed by arginine 91. Aspartate 148 serves as the catalytic Proton donor/acceptor. Residues 208–212 (HLGNG), 283–285 (DFR), and 331–335 (GLGEN) contribute to the ATP site. Glutamate 384 is a Mg(2+) binding site.

It belongs to the acetokinase family. As to quaternary structure, homodimer. Mg(2+) is required as a cofactor. Mn(2+) serves as cofactor.

It localises to the cytoplasm. It catalyses the reaction acetate + ATP = acetyl phosphate + ADP. It functions in the pathway metabolic intermediate biosynthesis; acetyl-CoA biosynthesis; acetyl-CoA from acetate: step 1/2. Its function is as follows. Catalyzes the formation of acetyl phosphate from acetate and ATP. Can also catalyze the reverse reaction. The protein is Acetate kinase of Natranaerobius thermophilus (strain ATCC BAA-1301 / DSM 18059 / JW/NM-WN-LF).